A 232-amino-acid polypeptide reads, in one-letter code: Triosephosphate isomerase (232 aa).

6 to 8 serves as a coordination point for substrate; sequence NFK. His86 acts as the Electrophile in catalysis. The active-site Proton acceptor is the Glu155. The substrate site is built by Gly161 and Ser191.

It belongs to the triosephosphate isomerase family. Homodimer.

Its subcellular location is the cytoplasm. It carries out the reaction D-glyceraldehyde 3-phosphate = dihydroxyacetone phosphate. Its pathway is carbohydrate biosynthesis; gluconeogenesis. It functions in the pathway carbohydrate degradation; glycolysis; D-glyceraldehyde 3-phosphate from glycerone phosphate: step 1/1. In terms of biological role, involved in the gluconeogenesis. Catalyzes stereospecifically the conversion of dihydroxyacetone phosphate (DHAP) to D-glyceraldehyde-3-phosphate (G3P). The protein is Triosephosphate isomerase of Nitratiruptor sp. (strain SB155-2).